We begin with the raw amino-acid sequence, 698 residues long: Transferrin-binding protein B (698 aa).

Residues 1–20 form the signal peptide; it reads MNNPLVNQAAMVLPVFLLSA. Cys-21 is lipidated: N-palmitoyl cysteine. Residue Cys-21 is the site of S-diacylglycerol cysteine attachment. 6 disordered regions span residues 33–58, 83–102, 294–324, 349–383, 428–479, and 669–698; these read VDTE…QKDQ, IKLS…KNPS, FSGK…SLSG, GSAK…SENS, ESGK…GDAN, and TKNA…KPVQ. Polar residues predominate over residues 46–56; the sequence is DVSSEKPQAQK. Over residues 299-315 the composition is skewed to basic and acidic residues; the sequence is EATDKPKNDGETKEHPF. The span at 369 to 383 shows a compositional bias: low complexity; the sequence is AAASNGAAGTSSENS. Polar residues predominate over residues 460-476; that stretch reads QAGTAENGNPAASNTAG. Low complexity predominate over residues 671–686; it reads NATDASGNGNSASSAT.

The protein belongs to the TbpB family. In terms of assembly, binds only human holo-transferrin (TF), via the TF C-terminus. Forms a large complex with TbpA and TF. Interacts via its C-terminal domain with Slam1.

It is found in the cell outer membrane. Its subcellular location is the cell surface. In terms of biological role, neisseria acquires iron by extracting it from serum transferrin (TF) in its human host. Acts as a TF receptor and is required for TF utilization. Involved in the initial capture of TF. Helps select only those TF molecules that can be used as an iron source and concentrates them on the cell surface, maintaining the iron-loaded status of the TF C-terminal lobe until its delivery to TbpA. In Neisseria meningitidis serogroup A / serotype 4A (strain DSM 15465 / Z2491), this protein is Transferrin-binding protein B.